The primary structure comprises 858 residues: NEDD4-binding protein 1 (858 aa).

Positions 17-37 (TCTEPPGGRQSPTASRAQPDS) are disordered. Residues 26-37 (QSPTASRAQPDS) show a composition bias toward polar residues. The region spanning 96–180 (KEDVYKAKEY…VQQFVALFQE (85 aa)) is the KH-like domain. 2 disordered regions span residues 262–321 (EDKT…TWTV) and 388–424 (QKTQ…KEKE). Over residues 285–316 (RSSESEQRDTKRQYSLERREEEQCEEREREPT) the composition is skewed to basic and acidic residues. Over residues 389 to 418 (KTQSTQGAQRTSRTPDPSPCANASSTSTSN) the composition is skewed to polar residues. Residues 598-750 (LRHIIIDGSN…LGKHGPHLDE (153 aa)) form the RNase NYN domain. The segment covering 774–784 (SVYSQAAQSTA) has biased composition (polar residues). The segment at 774–823 (SVYSQAAQSTAHPSSPSHWPHSGPPDWHLPRPSPSPPPQRSPSETTELKR) is disordered. Positions 785–799 (HPSSPSHWPHSGPPD) are enriched in low complexity. Over residues 804–813 (RPSPSPPPQR) the composition is skewed to pro residues. The segment at 813–858 (RSPSETTELKRKLYDIFPDQKQRIDRILSDNPYMRDLNALSGLLLG) is coCUN.

The protein belongs to the N4BP1 family.

The protein localises to the nucleus. Its subcellular location is the nucleolus. It localises to the PML body. Its function is as follows. Potent suppressor of cytokine production that acts as a regulator of innate immune signaling and inflammation. Acts as a key negative regulator of select cytokine and chemokine responses elicited by TRIF-independent Toll-like receptors (TLRs), thereby limiting inflammatory cytokine responses to minor insults. Has ribonuclease activity. The polypeptide is NEDD4-binding protein 1 (Danio rerio (Zebrafish)).